Reading from the N-terminus, the 472-residue chain is Glutamate--tRNA ligase 1 (472 aa).

Positions Pro9–Asn19 match the 'HIGH' region motif. Basic and acidic residues predominate over residues Ala112–Ser131. Positions Ala112–Ala133 are disordered. A 'KMSKS' region motif is present at residues Lys238–Arg242. Lys241 serves as a coordination point for ATP.

The protein belongs to the class-I aminoacyl-tRNA synthetase family. Glutamate--tRNA ligase type 1 subfamily. In terms of assembly, monomer.

The protein localises to the cytoplasm. The enzyme catalyses tRNA(Glu) + L-glutamate + ATP = L-glutamyl-tRNA(Glu) + AMP + diphosphate. Its function is as follows. Catalyzes the attachment of glutamate to tRNA(Glu) in a two-step reaction: glutamate is first activated by ATP to form Glu-AMP and then transferred to the acceptor end of tRNA(Glu). In Gluconobacter oxydans (strain 621H) (Gluconobacter suboxydans), this protein is Glutamate--tRNA ligase 1.